Reading from the N-terminus, the 1615-residue chain is Regulating synaptic membrane exocytosis protein 1 (1615 aa).

The tract at residues 1-26 is disordered; the sequence is MSSAVGPRGPRPPTVPPPMQELPDLS. Pro residues predominate over residues 9–20; that stretch reads GPRPPTVPPPMQ. One can recognise a RabBD domain in the interval 22–205; sequence LPDLSHLTEE…TKSGAWFFGS (184 aa). The segment at 133-193 adopts an FYVE-type zinc-finger fold; sequence KDDAPTCGIC…VCNLCRKQQE (61 aa). Positions 139, 142, 155, 158, 163, 166, 185, and 188 each coordinate Zn(2+). The interval 205 to 569 is disordered; that stretch reads SGPQQPSQDG…CEDVELESES (365 aa). Polar residues predominate over residues 206–222; sequence GPQQPSQDGTLSDTATG. The span at 227 to 240 shows a compositional bias: basic and acidic residues; that stretch reads VPREKKARLQERSR. The segment covering 241-256 has biased composition (polar residues); it reads SQTPLSTAAVSSQDTA. The segment covering 327-379 has biased composition (basic and acidic residues); that stretch reads ADERERKERRETRRLEKGRSQDYSDRPEKRDNGRVAEDQKQRKEEEYQTRYRS. Residues 399-410 show a composition bias toward basic residues; sequence MHARVSRARHER. Low complexity predominate over residues 421–459; the sequence is EAAAAAPAEATAGKRAPATARVSPPESPRARAAAAQPPT. Positions 460 to 475 are enriched in pro residues; it reads EHGPPPPRPAPGPAEP. Over residues 476 to 489 the composition is skewed to basic and acidic residues; that stretch reads PEPRVPEPLRKQGR. Residues 511 to 523 are compositionally biased toward polar residues; sequence RNDSLSSDQSESV. Position 514 is a phosphoserine (Ser514). Residues 529–541 are compositionally biased toward basic residues; it reads KPHRPKRGGKRRQ. Residues 559-569 show a composition bias toward acidic residues; that stretch reads SCEDVELESES. Phosphoserine is present on Ser592. One can recognise a PDZ domain in the interval 619 to 705; it reads RTTMPKESGA…EPQVEIIVSR (87 aa). The tract at residues 712 to 746 is disordered; sequence RIPESSHPPLESSSSSFESQKMERPSISVISPTSP. Residues 714–730 show a composition bias toward low complexity; the sequence is PESSHPPLESSSSSFES. Phosphoserine is present on residues Ser742 and Ser745. The 124-residue stretch at 756-879 folds into the C2 1 domain; sequence LPGQLSVKLW…ALLDDEPHWY (124 aa). Positions 884-1201 are disordered; that stretch reads HDESSLPLPQ…RQLPQVPVRS (318 aa). Position 895 is a phosphoserine (Ser895). Over residues 949-958 the composition is skewed to polar residues; it reads ATTLTVPEQQ. Position 991 is a phosphoserine (Ser991). The segment covering 1006 to 1023 has biased composition (basic and acidic residues); that stretch reads RHHDASRSPADHRSRHVE. Ser1045 carries the post-translational modification Phosphoserine. Basic and acidic residues predominate over residues 1078–1092; the sequence is SPERERHSRKSERCS. Residues 1173 to 1187 are compositionally biased toward polar residues; sequence QGSPTQSPPADTSFG. Phosphoserine is present on Ser1175. At Thr1177 the chain carries Phosphothreonine. A phosphoserine mark is found at Ser1179, Ser1231, Ser1233, Ser1234, Ser1262, Ser1263, and Ser1265. A disordered region spans residues 1256–1313; it reads DNASAKSSDSDVSDVSAISRASSTSRLSSTSFMSEQSERPRGRISSFTPKMQGRRMGT. Over residues 1268 to 1289 the composition is skewed to low complexity; sequence SDVSAISRASSTSRLSSTSFMS. Phosphoserine is present on Ser1339. A disordered region spans residues 1368 to 1397; it reads RSRSTSQLSQTESGHKKLKSTIQRSTETGM. In terms of domain architecture, C2 2 spans 1461–1579; the sequence is AMGDIQIGME…DLSSMVIGWY (119 aa). 4 positions are modified to phosphoserine: Ser1600, Ser1603, Ser1606, and Ser1615.

As to quaternary structure, interacts with RAB3C, RAB10, RAB26 and RAB37. Binds SNAP25, SYT1 and CACNA1B. Interaction with SYT1 is enhanced by calcium ions. Interaction with SNAP25 is weaker in the presence of calcium ions. Binds RAB3A, RAB3B and RAB3D that have been activated by GTP-binding. Binds UNC13A. Interacts with TSPOAP1 and RIMBP2. Interacts with PPFIA3 and PPFIA4. Interacts with ERC1. Post-translationally, phosphorylated by BRSK1. Highly expressed in hippocampus, brain cortex, cerebellum and olfactory bulb. Detected at lower levels in midbrain, hindbrain and spinal cord. Detected retina and in spinal cord motor neurons.

Its subcellular location is the cell membrane. It is found in the synapse. It localises to the presynaptic cell membrane. Its function is as follows. Rab effector involved in exocytosis. May act as scaffold protein that regulates neurotransmitter release at the active zone. Essential for maintaining normal probability of neurotransmitter release and for regulating release during short-term synaptic plasticity. Plays a role in dendrite formation by melanocytes. This chain is Regulating synaptic membrane exocytosis protein 1 (Rims1), found in Rattus norvegicus (Rat).